Reading from the N-terminus, the 772-residue chain is Semaphorin-3A (772 aa).

A signal peptide spans 1–20; sequence MGWFTGIACLFWGILLTARA. The Sema domain maps to 31-514; that stretch reads RLKLSYKEML…STAGVAQLPL (484 aa). N-linked (GlcNAc...) asparagine glycosylation occurs at Asn-53. A disulfide bridge links Cys-103 with Cys-114. Asn-125 is a glycosylation site (N-linked (GlcNAc...) asparagine). Cystine bridges form between Cys-132–Cys-141, Cys-269–Cys-381, Cys-293–Cys-341, and Cys-517–Cys-535. One can recognise an Ig-like C2-type domain in the interval 577-665; that stretch reads HGHSLEERII…GFMQTLLKVT (89 aa). N-linked (GlcNAc...) asparagine glycosylation occurs at Asn-591. Cysteines 650 and 723 form a disulfide. Basic and acidic residues predominate over residues 677–691; the sequence is LLHKDDDGDGSKTKE. 2 disordered regions span residues 677–698 and 729–772; these read LLHK…SMTP and RDRK…PRSV. Residues 729-738 are compositionally biased toward basic residues; the sequence is RDRKQRRQRP. Basic and acidic residues predominate over residues 750–772; it reads HMQESKKGRNRRTHEFERAPRSV.

The protein belongs to the semaphorin family. In terms of assembly, interacts with PLXND1. As to expression, expressed in the dorsal root ganglia.

Its subcellular location is the secreted. In terms of biological role, may be involved in guiding growing axons towards their targets by forming a molecular boundary that instructs axons to engage in the formation of specific nerve tracts. Binds to neuropilin. Involved in the development of the olfactory system and in neuronal control of puberty. This Rattus norvegicus (Rat) protein is Semaphorin-3A (Sema3a).